A 569-amino-acid polypeptide reads, in one-letter code: MPYRIDRRTYAETYGPTTGDRVRLADTELILEVEKDYTVYGDEVKFGGGKVIRDGMGQGQTSRAAGAVDTVITNALILDWWGIVKADVGLKDGRICAIGKAGNPDISDGVTIPIGPGTEAIAGEGHILTAGGIDTHIHFICPQQIETAIASGVTTLLGGGTGPATGTNATTCTPGAFHISRMLQAADGLPVNLGFFGKGNASTPEALDEQVRAGACGLKLHEDWGTTPAAIDCCLGVADRFDVQVCIHTDTLNEAGFVEDTIAAIKGRTIHTFHTEGAGGGHAPDIIRICGETNVLPSSTNPTRPYTRNTLEEHLDMLMVCHHLDSSIPEDVAFAESRIRRETIAAEDILHDLGAFSIIASDSQAMGRVGEVITRTFQTAHKMKVQRGVLEGDNSRNDNTRLKRYIAKVTINPAIAHGLDHQVGSVEVGKLADLVLWKPGFFGVKPELVLKGGSIAWAQMGDANASIPTPGPVHGRPMFASFGGAMAPSCLTFLSQAGLDAGVPEALGLRTPCVPVQNTRGIGKAQMKNNIALPKVEVDPETYEVFADGELLTCEPAEVLPMAQRYFLL.

In terms of domain architecture, Urease spans 131 to 569; sequence GGIDTHIHFI…LPMAQRYFLL (439 aa). Positions 136, 138, and 219 each coordinate Ni(2+). Lysine 219 carries the post-translational modification N6-carboxylysine. Histidine 221 contributes to the substrate binding site. Ni(2+) contacts are provided by histidine 248 and histidine 274. Histidine 322 acts as the Proton donor in catalysis. Position 362 (aspartate 362) interacts with Ni(2+).

Belongs to the metallo-dependent hydrolases superfamily. Urease alpha subunit family. As to quaternary structure, heterotrimer of UreA (gamma), UreB (beta) and UreC (alpha) subunits. Three heterotrimers associate to form the active enzyme. Requires Ni cation as cofactor. In terms of processing, carboxylation allows a single lysine to coordinate two nickel ions.

It is found in the cytoplasm. It catalyses the reaction urea + 2 H2O + H(+) = hydrogencarbonate + 2 NH4(+). It participates in nitrogen metabolism; urea degradation; CO(2) and NH(3) from urea (urease route): step 1/1. The protein is Urease subunit alpha of Synechococcus sp. (strain RCC307).